Here is a 533-residue protein sequence, read N- to C-terminus: Large neutral amino acids transporter small subunit 2 (533 aa).

The disordered stretch occupies residues Met1 to Gly33. Over Met1–Ser45 the chain is Cytoplasmic. 4 positions are modified to phosphoserine: Ser20, Ser23, Ser29, and Ser30. Residues Ala46–Val66 traverse the membrane as a helical segment. L-leucine is bound at residue Ile54. The Extracellular portion of the chain corresponds to Leu67–Gly74. A helical membrane pass occupies residues Leu75–Glu96. Residues Leu97–Gly117 lie on the Cytoplasmic side of the membrane. The helical transmembrane segment at Leu118–Pro150 threads the bilayer. Asn135 is an L-tryptophan binding site. Residues Leu151–Pro158 lie on the Extracellular side of the membrane. A helical transmembrane segment spans residues Glu159–Ser179. Topologically, residues Ser180–Arg182 are cytoplasmic. Residues Trp183 to Cys211 traverse the membrane as a helical segment. Residues Lys212–Asp231 lie on the Extracellular side of the membrane. Residues Ile232 to Asn253 form a helical membrane-spanning segment. Gly247 contacts L-leucine. Over Tyr254–Leu266 the chain is Cytoplasmic. The chain crosses the membrane as a helical span at residues Pro267 to Tyr288. Residues Val289–Gly313 are Extracellular-facing. Residues Val314 to Ser339 form a helical membrane-spanning segment. The Cytoplasmic portion of the chain corresponds to Arg340 to Pro365. The helical transmembrane segment at Ile366–Ser383 threads the bilayer. The Extracellular segment spans residues Asp384–Thr387. A helical transmembrane segment spans residues Leu388 to Val409. Residue Asn396 coordinates L-tryptophan. Over Leu410–Ser424 the chain is Cytoplasmic. 2 consecutive transmembrane segments (helical) span residues Leu425–Pro447 and Val448–Gly467. Over Val468–Pro533 the chain is Cytoplasmic. Residues Gly500–Pro533 are disordered. Residues Ser502–Glu512 are compositionally biased toward acidic residues. Phosphoserine is present on Ser529.

The protein belongs to the amino acid-polyamine-organocation (APC) superfamily. L-type amino acid transporter (LAT) (TC 2.A.3.8) family. In terms of assembly, disulfide-linked heterodimer composed of the catalytic light chain subunit SLC7A8 and the heavy chain subunit SLC3A2. SLC3A2 acts as a chaperone for correct plasma membrane trafficking and stabilization of SLC7A8 and modulates the substrate affinity and specificity of SLC7A8. ICAM-1 associates with the heterodimer SLC3A2/SLC7A8; facilitates leucine uptake. In terms of tissue distribution, expression is seen in jejunum mucosa and the epithelial cells of the jejunum, ileum and colon, as well as in kidney, placenta, brain, testis and skeletal muscle. Expressed in retina, inner blood-retinal barrier of retina, retinal vascular endothelial cells. Also expressed in the intestinal epithelial cell line IEC-6 and in the retinal capillary endothelial cell line TR-iBRB2.

It localises to the cell membrane. The protein resides in the basolateral cell membrane. The enzyme catalyses L-dopa(out) + L-phenylalanine(in) = L-dopa(in) + L-phenylalanine(out). It carries out the reaction 3,3'-diiodo-L-thyronine(out) = 3,3'-diiodo-L-thyronine(in). The catalysed reaction is L-histidine(in) + L-phenylalanine(out) = L-histidine(out) + L-phenylalanine(in). It catalyses the reaction L-tryptophan(in) + L-phenylalanine(out) = L-tryptophan(out) + L-phenylalanine(in). The enzyme catalyses L-isoleucine(in) + L-phenylalanine(out) = L-isoleucine(out) + L-phenylalanine(in). It carries out the reaction L-valine(in) + L-phenylalanine(out) = L-valine(out) + L-phenylalanine(in). The catalysed reaction is L-leucine(in) + L-phenylalanine(out) = L-leucine(out) + L-phenylalanine(in). It catalyses the reaction L-glutamine(in) + L-phenylalanine(out) = L-glutamine(out) + L-phenylalanine(in). The enzyme catalyses L-cysteine(in) + L-phenylalanine(out) = L-cysteine(out) + L-phenylalanine(in). It carries out the reaction L-phenylalanine(out) + L-methionine(in) = L-phenylalanine(in) + L-methionine(out). The catalysed reaction is L-leucine(out) + L-methionine(in) = L-leucine(in) + L-methionine(out). It catalyses the reaction L-cysteine(out) + L-methionine(in) = L-cysteine(in) + L-methionine(out). The enzyme catalyses S-methylmercury-L-cysteine(out) + L-methionine(in) = S-methylmercury-L-cysteine(in) + L-methionine(out). It carries out the reaction S-methylmercury-L-cysteine(in) + L-leucine(out) = S-methylmercury-L-cysteine(out) + L-leucine(in). The catalysed reaction is S-methylmercury-L-cysteine(in) + L-phenylalanine(out) = S-methylmercury-L-cysteine(out) + L-phenylalanine(in). It catalyses the reaction L-phenylalanine(out) + L-serine(in) = L-phenylalanine(in) + L-serine(out). The enzyme catalyses L-phenylalanine(out) + glycine(in) = L-phenylalanine(in) + glycine(out). It carries out the reaction L-phenylalanine(out) + L-alanine(in) = L-phenylalanine(in) + L-alanine(out). The catalysed reaction is 3,3',5-triiodo-L-thyronine(out) = 3,3',5-triiodo-L-thyronine(in). Leucine transport activity is inhibited by 2-amino-bicyclo-(2,2,1)-heptane-2-carboxylate (BCH), glycine, L-isomers of the neutral amino acids and histidine. Associates with SLC3A2 to form a functional heterodimeric complex that translocates small and large neutral amino acids with broad specificity and a stoichiometry of 1:1. Functions as amino acid antiporter mediating the influx of extracellular essential amino acids mainly in exchange with the efflux of highly concentrated intracellular amino acids. Has relatively symmetrical selectivities but strongly asymmetrical substrate affinities at both the intracellular and extracellular sides of the transporter. This asymmetry allows SLC7A8 to regulate intracellular amino acid pools (mM concentrations) by exchange with external amino acids (uM concentration range), equilibrating the relative concentrations of different amino acids across the plasma membrane instead of mediating their net uptake. May play an essential role in the reabsorption of neutral amino acids from the epithelial cells to the bloodstream in the kidney. Involved in the uptake of methylmercury (MeHg) when administered as the L-cysteine or D,L-homocysteine complexes, and hence plays a role in metal ion homeostasis and toxicity. Involved in the cellular activity of small molecular weight nitrosothiols, via the stereoselective transport of L-nitrosocysteine (L-CNSO) across the transmembrane. Imports the thyroid hormone diiodothyronine (T2) and to a smaller extent triiodothyronine (T3) but not rT 3 or thyroxine (T4). Mediates the uptake of L-DOPA. May participate in auditory function. This chain is Large neutral amino acids transporter small subunit 2 (Slc7a8), found in Rattus norvegicus (Rat).